The primary structure comprises 353 residues: Tetraacyldisaccharide 4'-kinase (353 aa).

49 to 56 (TAGGTGKT) provides a ligand contact to ATP.

It belongs to the LpxK family.

The catalysed reaction is a lipid A disaccharide + ATP = a lipid IVA + ADP + H(+). The protein operates within glycolipid biosynthesis; lipid IV(A) biosynthesis; lipid IV(A) from (3R)-3-hydroxytetradecanoyl-[acyl-carrier-protein] and UDP-N-acetyl-alpha-D-glucosamine: step 6/6. In terms of biological role, transfers the gamma-phosphate of ATP to the 4'-position of a tetraacyldisaccharide 1-phosphate intermediate (termed DS-1-P) to form tetraacyldisaccharide 1,4'-bis-phosphate (lipid IVA). The chain is Tetraacyldisaccharide 4'-kinase from Chlorobium phaeovibrioides (strain DSM 265 / 1930) (Prosthecochloris vibrioformis (strain DSM 265)).